The following is a 220-amino-acid chain: Fructose-6-phosphate aldolase 2 (220 aa).

Lys-85 serves as the catalytic Schiff-base intermediate with substrate.

The protein belongs to the transaldolase family. Type 3A subfamily. As to quaternary structure, homodecamer.

The protein resides in the cytoplasm. The enzyme catalyses beta-D-fructose 6-phosphate = dihydroxyacetone + D-glyceraldehyde 3-phosphate. Functionally, catalyzes the reversible formation of fructose 6-phosphate from dihydroxyacetone and D-glyceraldehyde 3-phosphate via an aldolization reaction. Can utilize hydroxyacetone as an alternative donor substrate. Is also able to catalyze the direct self-aldol addition of glycolaldehyde. Is less catalytically efficient than the isozyme FsaA. Does not display transaldolase activity. This Escherichia coli (strain K12) protein is Fructose-6-phosphate aldolase 2 (fsaB).